Reading from the N-terminus, the 192-residue chain is Small ribosomal subunit protein uS4c-2 (192 aa).

The S4 RNA-binding domain occupies 91 to 155 (TRLDHLVYRA…PKPPEYLPPY (65 aa)).

This sequence belongs to the universal ribosomal protein uS4 family. As to quaternary structure, part of the 30S ribosomal subunit. Contacts protein S5. The interaction surface between S4 and S5 is involved in control of translational fidelity.

Its subcellular location is the plastid. The protein resides in the chloroplast. One of the primary rRNA binding proteins, it binds directly to 16S rRNA where it nucleates assembly of the body of the 30S subunit. Its function is as follows. With S5 and S12 plays an important role in translational accuracy. The sequence is that of Small ribosomal subunit protein uS4c-2 from Cyanidium caldarium (Red alga).